The sequence spans 313 residues: Olfactory receptor 4M1 (313 aa).

Residues 1 to 25 (METANYTKVTEFVLTGLSQTREVQL) lie on the Extracellular side of the membrane. Residue N5 is glycosylated (N-linked (GlcNAc...) asparagine). A helical membrane pass occupies residues 26 to 49 (VLFVIFLSFYLFILPGNILIICTI). Residues 50–57 (RLDPHLTS) lie on the Cytoplasmic side of the membrane. The chain crosses the membrane as a helical span at residues 58-79 (PMYFLLANLALLDIWYSSITAP). The Extracellular portion of the chain corresponds to 80–100 (KMLIDFFVERKIISFGGCIAQ). Residues C97 and C189 are joined by a disulfide bond. The chain crosses the membrane as a helical span at residues 101–120 (LFFLHFVGASEMFLLTVMAY). Over 121-139 (DRYAAICRPLHYATIMNRR) the chain is Cytoplasmic. Residues 140–158 (LCCILVALSWMGGFIHSII) form a helical membrane-spanning segment. Residues 159–195 (QVALIVRLPFCGPNELDSYFCDITQVVRIACANTFPE) lie on the Extracellular side of the membrane. Residues 196–219 (ELVMICSSGLISVVCFIALLMSYA) traverse the membrane as a helical segment. The Cytoplasmic segment spans residues 220–237 (FLLALLKKHSGSGENTNR). A helical transmembrane segment spans residues 238–260 (AMSTCYSHITIVVLMFGPSIYIY). Topologically, residues 261–271 (ARPFDSFSLDK) are extracellular. A helical membrane pass occupies residues 272 to 291 (VVSVFHTVIFPLLNPIIYTL). Over 292–313 (RNKEVKAAMRKVVTKYILCEEK) the chain is Cytoplasmic.

This sequence belongs to the G-protein coupled receptor 1 family. Highly expressed in the testis and olfactory bulb.

It localises to the cell membrane. Olfactory receptor that acts as a receptor of Asprosin hormone, potentially at the surface of hepatocytes and may help to promote hepatocyte glucose release. The protein is Olfactory receptor 4M1 of Homo sapiens (Human).